Here is a 437-residue protein sequence, read N- to C-terminus: Protein farnesyltransferase subunit beta (437 aa).

5 PFTB repeats span residues 123 to 164 (ATDV…CIIG), 174 to 215 (REKL…SLTN), 222 to 263 (FEGT…VILK), 270 to 312 (LKSL…PLLH), and 332 to 374 (QQAL…SIAQ). Residues 248–251 (HGGY) and 291–294 (RCNK) each bind (2E,6E)-farnesyl diphosphate. Zn(2+) contacts are provided by aspartate 297 and cysteine 299. Residue 300-303 (YSFW) participates in (2E,6E)-farnesyl diphosphate binding. Residue histidine 362 coordinates Zn(2+). Residue serine 432 is modified to Phosphoserine. Threonine 436 is subject to Phosphothreonine.

The protein belongs to the protein prenyltransferase subunit beta family. In terms of assembly, heterodimer of FNTA and FNTB. Zn(2+) serves as cofactor.

It carries out the reaction L-cysteinyl-[protein] + (2E,6E)-farnesyl diphosphate = S-(2E,6E)-farnesyl-L-cysteinyl-[protein] + diphosphate. Its function is as follows. Essential subunit of the farnesyltransferase complex. Catalyzes the transfer of a farnesyl moiety from farnesyl diphosphate to a cysteine at the fourth position from the C-terminus of several proteins having the C-terminal sequence Cys-aliphatic-aliphatic-X. This Mus musculus (Mouse) protein is Protein farnesyltransferase subunit beta (Fntb).